A 210-amino-acid polypeptide reads, in one-letter code: Na(+)-translocating NADH-quinone reductase subunit D (210 aa).

A run of 5 helical transmembrane segments spans residues F42–I62, I72–A92, V103–M123, L131–F151, and N178–I198.

It belongs to the NqrDE/RnfAE family. In terms of assembly, composed of six subunits; NqrA, NqrB, NqrC, NqrD, NqrE and NqrF.

It is found in the cell inner membrane. It carries out the reaction a ubiquinone + n Na(+)(in) + NADH + H(+) = a ubiquinol + n Na(+)(out) + NAD(+). Its function is as follows. NQR complex catalyzes the reduction of ubiquinone-1 to ubiquinol by two successive reactions, coupled with the transport of Na(+) ions from the cytoplasm to the periplasm. NqrA to NqrE are probably involved in the second step, the conversion of ubisemiquinone to ubiquinol. The protein is Na(+)-translocating NADH-quinone reductase subunit D of Vibrio campbellii (strain ATCC BAA-1116).